A 164-amino-acid polypeptide reads, in one-letter code: Outer membrane protein assembly factor BamE (164 aa).

The N-terminal stretch at 1-19 is a signal peptide; the sequence is MHAFFPRLLLLLLFLPLTH. Residues 111 to 164 form a disordered region; that stretch reads PAFSESEPAQNFFSPEQTFTPAPDTDSNMNEEPDKKGTVNFLKENQTNFYKDNQ. 2 stretches are compositionally biased toward polar residues: residues 117 to 140 and 153 to 164; these read EPAQ…SNMN and KENQTNFYKDNQ.

Belongs to the BamE family. Part of the Bam complex.

Its subcellular location is the cell outer membrane. In terms of biological role, part of the outer membrane protein assembly complex, which is involved in assembly and insertion of beta-barrel proteins into the outer membrane. The polypeptide is Outer membrane protein assembly factor BamE (Nitrosomonas europaea (strain ATCC 19718 / CIP 103999 / KCTC 2705 / NBRC 14298)).